A 381-amino-acid chain; its full sequence is Chaperone protein DnaJ (381 aa).

The J domain maps to 5 to 70; it reads DFYEVLGVGR…QKKAAYDQYG (66 aa). Residues 136–214 form a CR-type zinc finger; it reads GVSKEIEVPT…CHGQGRKQKT (79 aa). Cys149, Cys152, Cys166, Cys169, Cys188, Cys191, Cys202, and Cys205 together coordinate Zn(2+). 4 CXXCXGXG motif repeats span residues 149–156, 166–173, 188–195, and 202–209; these read CDTCDGSG, CGTCHGHG, CPTCHGKG, and CNECHGQG.

The protein belongs to the DnaJ family. In terms of assembly, homodimer. It depends on Zn(2+) as a cofactor.

It is found in the cytoplasm. In terms of biological role, participates actively in the response to hyperosmotic and heat shock by preventing the aggregation of stress-denatured proteins and by disaggregating proteins, also in an autonomous, DnaK-independent fashion. Unfolded proteins bind initially to DnaJ; upon interaction with the DnaJ-bound protein, DnaK hydrolyzes its bound ATP, resulting in the formation of a stable complex. GrpE releases ADP from DnaK; ATP binding to DnaK triggers the release of the substrate protein, thus completing the reaction cycle. Several rounds of ATP-dependent interactions between DnaJ, DnaK and GrpE are required for fully efficient folding. Also involved, together with DnaK and GrpE, in the DNA replication of plasmids through activation of initiation proteins. This chain is Chaperone protein DnaJ, found in Vibrio campbellii (strain ATCC BAA-1116).